The primary structure comprises 155 residues: Ribosomal RNA large subunit methyltransferase H (155 aa).

S-adenosyl-L-methionine-binding positions include L72, G103, and 122–127 (LSDLTL).

This sequence belongs to the RNA methyltransferase RlmH family. In terms of assembly, homodimer.

It localises to the cytoplasm. It catalyses the reaction pseudouridine(1915) in 23S rRNA + S-adenosyl-L-methionine = N(3)-methylpseudouridine(1915) in 23S rRNA + S-adenosyl-L-homocysteine + H(+). Functionally, specifically methylates the pseudouridine at position 1915 (m3Psi1915) in 23S rRNA. This Acidovorax sp. (strain JS42) protein is Ribosomal RNA large subunit methyltransferase H.